The primary structure comprises 453 residues: Bifunctional protein GlmU (453 aa).

Positions 1–225 (MHAHVILAAG…AEEALGVNTR (225 aa)) are pyrophosphorylase. UDP-N-acetyl-alpha-D-glucosamine-binding positions include 7–10 (LAAG), Lys-21, Gln-72, and 77–78 (GT). Residue Asp-102 participates in Mg(2+) binding. 4 residues coordinate UDP-N-acetyl-alpha-D-glucosamine: Gly-138, Glu-152, Asn-167, and Asn-223. Position 223 (Asn-223) interacts with Mg(2+). Residues 226–246 (EELARVEGVLLRRLRAEWMGK) form a linker region. The tract at residues 247 to 453 (GVRMILPETI…GYALRKLGEG (207 aa)) is N-acetyltransferase. UDP-N-acetyl-alpha-D-glucosamine contacts are provided by Arg-329 and Lys-347. Residue His-359 is the Proton acceptor of the active site. UDP-N-acetyl-alpha-D-glucosamine contacts are provided by Tyr-362 and Asn-373. Acetyl-CoA-binding positions include Ala-376, 382–383 (NY), Ser-401, Ala-419, and Arg-436.

It in the N-terminal section; belongs to the N-acetylglucosamine-1-phosphate uridyltransferase family. This sequence in the C-terminal section; belongs to the transferase hexapeptide repeat family. In terms of assembly, homotrimer. The cofactor is Mg(2+).

It localises to the cytoplasm. It carries out the reaction alpha-D-glucosamine 1-phosphate + acetyl-CoA = N-acetyl-alpha-D-glucosamine 1-phosphate + CoA + H(+). It catalyses the reaction N-acetyl-alpha-D-glucosamine 1-phosphate + UTP + H(+) = UDP-N-acetyl-alpha-D-glucosamine + diphosphate. The protein operates within nucleotide-sugar biosynthesis; UDP-N-acetyl-alpha-D-glucosamine biosynthesis; N-acetyl-alpha-D-glucosamine 1-phosphate from alpha-D-glucosamine 6-phosphate (route II): step 2/2. It functions in the pathway nucleotide-sugar biosynthesis; UDP-N-acetyl-alpha-D-glucosamine biosynthesis; UDP-N-acetyl-alpha-D-glucosamine from N-acetyl-alpha-D-glucosamine 1-phosphate: step 1/1. Its pathway is bacterial outer membrane biogenesis; LPS lipid A biosynthesis. Catalyzes the last two sequential reactions in the de novo biosynthetic pathway for UDP-N-acetylglucosamine (UDP-GlcNAc). The C-terminal domain catalyzes the transfer of acetyl group from acetyl coenzyme A to glucosamine-1-phosphate (GlcN-1-P) to produce N-acetylglucosamine-1-phosphate (GlcNAc-1-P), which is converted into UDP-GlcNAc by the transfer of uridine 5-monophosphate (from uridine 5-triphosphate), a reaction catalyzed by the N-terminal domain. The chain is Bifunctional protein GlmU from Thermus thermophilus (strain ATCC 27634 / DSM 579 / HB8).